The following is a 211-amino-acid chain: Dual specificity protein phosphatase 26 (211 aa).

Residues 60–207 enclose the Tyrosine-protein phosphatase domain; the sequence is NHADEVWPGL…LLALDRRLRQ (148 aa). Cysteine 152 acts as the Phosphocysteine intermediate in catalysis.

It belongs to the protein-tyrosine phosphatase family. Non-receptor class dual specificity subfamily. In terms of assembly, interacts with HSF4.

Its subcellular location is the cytoplasm. The protein localises to the nucleus. It is found in the golgi apparatus. The enzyme catalyses O-phospho-L-tyrosyl-[protein] + H2O = L-tyrosyl-[protein] + phosphate. The catalysed reaction is O-phospho-L-seryl-[protein] + H2O = L-seryl-[protein] + phosphate. It catalyses the reaction O-phospho-L-threonyl-[protein] + H2O = L-threonyl-[protein] + phosphate. Its function is as follows. Inactivates MAPK1 and MAPK3 which leads to dephosphorylation of heat shock factor protein 4 and a reduction in its DNA-binding activity. The sequence is that of Dual specificity protein phosphatase 26 (DUSP26) from Bos taurus (Bovine).